A 215-amino-acid chain; its full sequence is Probable transaldolase (215 aa).

Catalysis depends on lysine 83, which acts as the Schiff-base intermediate with substrate.

This sequence belongs to the transaldolase family. Type 3B subfamily.

Its subcellular location is the cytoplasm. It catalyses the reaction D-sedoheptulose 7-phosphate + D-glyceraldehyde 3-phosphate = D-erythrose 4-phosphate + beta-D-fructose 6-phosphate. Its pathway is carbohydrate degradation; pentose phosphate pathway; D-glyceraldehyde 3-phosphate and beta-D-fructose 6-phosphate from D-ribose 5-phosphate and D-xylulose 5-phosphate (non-oxidative stage): step 2/3. Functionally, transaldolase is important for the balance of metabolites in the pentose-phosphate pathway. This Methanococcus maripaludis (strain C6 / ATCC BAA-1332) protein is Probable transaldolase.